A 114-amino-acid chain; its full sequence is INGDAKGTVFFEQETSEAPVKVTGEGLGLAKGLHGFHVHEFGDNTNGCMSSGPHFNPRNKEHGAPTDENRHLGDLGNIQAAGDSPTAVSITDSKITLFGADSIIGRTVVVHADA.

Positions 37, 39, and 54 each coordinate Cu cation. The segment at 48–68 is disordered; sequence CMSSGPHFNPRNKEHGAPTDE. 4 residues coordinate Zn(2+): His54, His62, His71, and Asp74. A compositionally biased stretch (basic and acidic residues) spans 58-68; that stretch reads RNKEHGAPTDE. Position 111 (His111) interacts with Cu cation.

The protein belongs to the Cu-Zn superoxide dismutase family. Homodimer. Cu cation serves as cofactor. The cofactor is Zn(2+).

It is found in the cytoplasm. The catalysed reaction is 2 superoxide + 2 H(+) = H2O2 + O2. Functionally, destroys radicals which are normally produced within the cells and which are toxic to biological systems. This Drosophila miranda (Fruit fly) protein is Superoxide dismutase [Cu-Zn].